Here is a 1222-residue protein sequence, read N- to C-terminus: Protein SCP160 (1222 aa).

Polar residues predominate over residues 1–12 (MSEEQTAIDSPP). The segment at 1 to 59 (MSEEQTAIDSPPSTVEGSVETVTTIDSPSTTASTIAATAEEHPQLEKKPTPLPSLKDLP) is disordered. Residues 13 to 38 (STVEGSVETVTTIDSPSTTASTIAAT) show a composition bias toward low complexity. Residues 39–49 (AEEHPQLEKKP) are compositionally biased toward basic and acidic residues. A Phosphothreonine modification is found at Thr50. Residues Ser54, Ser63, Ser85, Ser87, and Ser89 each carry the phosphoserine modification. The disordered stretch occupies residues 79 to 98 (KPAVSNSPSPSPSAPSLTTG). The KH 1 domain maps to 177 to 249 (PINAVIEVPS…ESVNLAKAKI (73 aa)). Ser630 carries the post-translational modification Phosphoserine. 5 KH domains span residues 634–702 (KSKM…KKYL), 712–771 (IITK…HEEL), 782–851 (GHKM…AKRV), 861–929 (FVTE…VEEI), and 939–1001 (SVTK…EKKI). Phosphoserine is present on Ser1112. In terms of domain architecture, KH 7 spans 1153–1216 (YAGYVWGADT…AGVEKAGEMV (64 aa)).

The protein resides in the endoplasmic reticulum membrane. Its subcellular location is the nucleus membrane. Its function is as follows. Involved in the control of mitotic chromosome transmission. Required during cell division for faithful partitioning of the ER-nuclear envelope membranes which, in S.cerevisiae, enclose the duplicated chromosomes. The chain is Protein SCP160 (SCP160) from Saccharomyces cerevisiae (strain ATCC 204508 / S288c) (Baker's yeast).